Reading from the N-terminus, the 526-residue chain is Glutamyl-tRNA(Gln) amidotransferase subunit A, mitochondrial (526 aa).

K76 serves as the catalytic Charge relay system. Residues 147–166 (QYREKRKQNSHSENEDSNWL) are disordered. Residue S171 is the Charge relay system of the active site. S195 functions as the Acyl-ester intermediate in the catalytic mechanism.

Belongs to the amidase family. GatA subfamily. In terms of assembly, subunit of the heterotrimeric GatCAB amidotransferase (AdT) complex, composed of A (QRSL1), B (GATB) and C (GATC) subunits.

The protein resides in the mitochondrion. It carries out the reaction L-glutamyl-tRNA(Gln) + L-glutamine + ATP + H2O = L-glutaminyl-tRNA(Gln) + L-glutamate + ADP + phosphate + H(+). Its function is as follows. Allows the formation of correctly charged Gln-tRNA(Gln) through the transamidation of misacylated Glu-tRNA(Gln) in the mitochondria. The reaction takes place in the presence of glutamine and ATP through an activated gamma-phospho-Glu-tRNA(Gln). This Bos taurus (Bovine) protein is Glutamyl-tRNA(Gln) amidotransferase subunit A, mitochondrial.